Consider the following 276-residue polypeptide: Rhomboid protease GlpG (276 aa).

A run of 6 helical transmembrane segments spans residues G94–L114, A142–G162, L169–Q189, F192–W212, L229–M249, and A250–L270. The active-site Nucleophile is S201. H254 is a catalytic residue.

It belongs to the peptidase S54 family.

It is found in the cell inner membrane. The enzyme catalyses Cleaves type-1 transmembrane domains using a catalytic dyad composed of serine and histidine that are contributed by different transmembrane domains.. In terms of biological role, rhomboid-type serine protease that catalyzes intramembrane proteolysis. This is Rhomboid protease GlpG from Escherichia coli O81 (strain ED1a).